We begin with the raw amino-acid sequence, 168 residues long: Disulfide bond formation protein B 2 (168 aa).

At 1–9 (MSLACLRSF) the chain is on the cytoplasmic side. A helical transmembrane segment spans residues 10–26 (FLPALLASTAVLVASFH). The Periplasmic segment spans residues 27-44 (LESVVGLVPCALCFSQRL). Cys-36 and Cys-39 are disulfide-bonded. Residues 45-61 (MLGVYALVCLAALVHSP) traverse the membrane as a helical segment. Topologically, residues 62–67 (AARGRR) are cytoplasmic. The chain crosses the membrane as a helical span at residues 68–85 (AYAGLALASAFGGALLAG). Residues 86-140 (RHVWLQGDPQVVDGCHLPVEQVLQRPLGEILQMFLLGSPDCVSISWSFLDLTLPE) lie on the Periplasmic side of the membrane. A disulfide bridge links Cys-100 with Cys-126. Residues 141-159 (WSLLAFLLLAAMPLSWLVA) form a helical membrane-spanning segment. The Cytoplasmic portion of the chain corresponds to 160 to 168 (YRFRKRAMA).

Belongs to the DsbB family.

The protein resides in the cell inner membrane. Its function is as follows. Required for disulfide bond formation in some periplasmic proteins. Acts by oxidizing the DsbA protein. The protein is Disulfide bond formation protein B 2 of Pseudomonas entomophila (strain L48).